Here is a 113-residue protein sequence, read N- to C-terminus: U11-theraphotoxin-Hhn1a (113 aa).

A signal peptide spans 1–21 (MNTVRATFLLVFVLAVSLGQA). A propeptide spanning residues 22 to 74 (DKDENRMEMQEKTEQGKSYLDFAENLLLQKLEELEAKLLEEDSEESRNSRQKR) is cleaved from the precursor. The span at 60 to 69 (LEEDSEESRN) shows a compositional bias: basic and acidic residues. The segment at 60-82 (LEEDSEESRNSRQKRCIGEGVPC) is disordered. 3 disulfide bridges follow: cysteine 75-cysteine 90, cysteine 82-cysteine 95, and cysteine 89-cysteine 110.

The protein belongs to the neurotoxin 14 (magi-1) family. 01 (HNTX-16) subfamily. As to expression, expressed by the venom gland.

It localises to the secreted. Functionally, probable ion channel inhibitor. This is U11-theraphotoxin-Hhn1a from Cyriopagopus hainanus (Chinese bird spider).